The chain runs to 240 residues: GATA transcription factor 4 (240 aa).

The segment at 104–124 (ISFTGKPRSRRSRAPAPSVAG) is disordered. Residues 109 to 116 (KPRSRRSR) carry the Nuclear localization signal motif. The GATA-type zinc finger occupies 154 to 208 (ADGARRCTHCASEKTPQWRTGPLGPKTLCNACGVRYKSGRLVPEYRPASSPTFVL).

Belongs to the type IV zinc-finger family. Class A subfamily. In terms of tissue distribution, expressed in roots, flowers and leaves, and to a lower extent in stems.

It is found in the nucleus. Functionally, transcriptional activator that specifically binds 5'-GATA-3' or 5'-GAT-3' motifs within gene promoters. May be involved in the regulation of some light-responsive genes. The protein is GATA transcription factor 4 (GATA4) of Arabidopsis thaliana (Mouse-ear cress).